Here is a 521-residue protein sequence, read N- to C-terminus: Glutamyl-tRNA(Gln) amidotransferase subunit A, mitochondrial (521 aa).

Residues Lys-61 and Ser-139 each act as charge relay system in the active site. Catalysis depends on Ser-163, which acts as the Acyl-ester intermediate.

The protein belongs to the amidase family. GatA subfamily. In terms of assembly, subunit of the heterotrimeric GatCAB amidotransferase (AdT) complex, composed of A, B and C subunits.

Its subcellular location is the mitochondrion. The enzyme catalyses L-glutamyl-tRNA(Gln) + L-glutamine + ATP + H2O = L-glutaminyl-tRNA(Gln) + L-glutamate + ADP + phosphate + H(+). In terms of biological role, allows the formation of correctly charged Gln-tRNA(Gln) through the transamidation of misacylated Glu-tRNA(Gln) in the mitochondria. The reaction takes place in the presence of glutamine and ATP through an activated gamma-phospho-Glu-tRNA(Gln). This Ajellomyces capsulatus (strain G186AR / H82 / ATCC MYA-2454 / RMSCC 2432) (Darling's disease fungus) protein is Glutamyl-tRNA(Gln) amidotransferase subunit A, mitochondrial.